Consider the following 118-residue polypeptide: Protein TusC (118 aa).

It belongs to the DsrF/TusC family. Heterohexamer, formed by a dimer of trimers. The hexameric TusBCD complex contains 2 copies each of TusB, TusC and TusD. The TusBCD complex interacts with TusE.

The protein resides in the cytoplasm. Its function is as follows. Part of a sulfur-relay system required for 2-thiolation of 5-methylaminomethyl-2-thiouridine (mnm(5)s(2)U) at tRNA wobble positions. The protein is Protein TusC of Salmonella paratyphi C (strain RKS4594).